A 240-amino-acid polypeptide reads, in one-letter code: Glutathione S-transferase omega-1 (240 aa).

N-acetylserine is present on Ser2. Residues 22 to 101 (GQIRVYSMRF…YLDEAYPEKK (80 aa)) form the GST N-terminal domain. Cys32 serves as the catalytic Nucleophile. Lys57 carries the N6-acetyllysine modification. Glutathione is bound by residues Lys59, Val72, and 85–86 (ES). The 122-residue stretch at 106-227 (DPYKKARQKM…AKTYREYLNL (122 aa)) folds into the GST C-terminal domain. A Phosphoserine modification is found at Ser129. Position 152 is an N6-acetyllysine (Lys152).

This sequence belongs to the GST superfamily. Omega family. Homodimer.

It is found in the cytoplasm. The protein resides in the cytosol. The catalysed reaction is RX + glutathione = an S-substituted glutathione + a halide anion + H(+). It carries out the reaction L-dehydroascorbate + 2 glutathione = glutathione disulfide + L-ascorbate. The enzyme catalyses methylarsonate + 2 glutathione + H(+) = methylarsonous acid + glutathione disulfide + H2O. Functionally, exhibits glutathione-dependent thiol transferase and dehydroascorbate reductase activities. Has S-(phenacyl)glutathione reductase activity. Also has glutathione S-transferase activity. Participates in the biotransformation of inorganic arsenic and reduces monomethylarsonic acid (MMA) and dimethylarsonic acid. This Mus musculus (Mouse) protein is Glutathione S-transferase omega-1 (Gsto1).